Consider the following 76-residue polypeptide: ATP synthase subunit 9, mitochondrial (76 aa).

The next 2 membrane-spanning stretches (helical) occupy residues 14-34 (ISTIGLLGAGIGIAIVFAALI) and 52-72 (ILGFALSEATGLFCLMISFLL).

Belongs to the ATPase C chain family. F-type ATPases have 2 components, CF(1) - the catalytic core - and CF(0) - the membrane proton channel. CF(1) has five subunits: alpha(3), beta(3), gamma(1), delta(1), epsilon(1). CF(0) has three main subunits: a, b and c.

It localises to the mitochondrion membrane. In terms of biological role, mitochondrial membrane ATP synthase (F(1)F(0) ATP synthase or Complex V) produces ATP from ADP in the presence of a proton gradient across the membrane which is generated by electron transport complexes of the respiratory chain. F-type ATPases consist of two structural domains, F(1) - containing the extramembraneous catalytic core and F(0) - containing the membrane proton channel, linked together by a central stalk and a peripheral stalk. During catalysis, ATP synthesis in the catalytic domain of F(1) is coupled via a rotary mechanism of the central stalk subunits to proton translocation. Part of the complex F(0) domain. A homomeric c-ring of probably 10 subunits is part of the complex rotary element. The chain is ATP synthase subunit 9, mitochondrial (ATP9) from Vanderwaltozyma polyspora (strain ATCC 22028 / DSM 70294 / BCRC 21397 / CBS 2163 / NBRC 10782 / NRRL Y-8283 / UCD 57-17) (Kluyveromyces polysporus).